The chain runs to 266 residues: Glucosamine-6-phosphate deaminase (266 aa).

Asp-72 serves as the catalytic Proton acceptor; for enolization step. Asp-141 acts as the For ring-opening step in catalysis. The active-site Proton acceptor; for ring-opening step is the His-143. The active-site For ring-opening step is Glu-148.

This sequence belongs to the glucosamine/galactosamine-6-phosphate isomerase family. NagB subfamily. As to quaternary structure, homohexamer.

The enzyme catalyses alpha-D-glucosamine 6-phosphate + H2O = beta-D-fructose 6-phosphate + NH4(+). Its pathway is amino-sugar metabolism; N-acetylneuraminate degradation; D-fructose 6-phosphate from N-acetylneuraminate: step 5/5. Allosterically activated by N-acetylglucosamine 6-phosphate (GlcNAc6P). Its function is as follows. Catalyzes the reversible isomerization-deamination of glucosamine 6-phosphate (GlcN6P) to form fructose 6-phosphate (Fru6P) and ammonium ion. The sequence is that of Glucosamine-6-phosphate deaminase from Vibrio cholerae serotype O1 (strain ATCC 39541 / Classical Ogawa 395 / O395).